The primary structure comprises 921 residues: Isoleucine--tRNA ligase (921 aa).

Residues 57-67 (PYANGDIHMGH) carry the 'HIGH' region motif. L-isoleucyl-5'-AMP is bound at residue Glu-552. Positions 593–597 (KMSKS) match the 'KMSKS' region motif. Lys-596 contacts ATP. 4 residues coordinate Zn(2+): Cys-888, Cys-891, Cys-908, and Cys-911.

This sequence belongs to the class-I aminoacyl-tRNA synthetase family. IleS type 1 subfamily. In terms of assembly, monomer. The cofactor is Zn(2+).

It localises to the cytoplasm. It carries out the reaction tRNA(Ile) + L-isoleucine + ATP = L-isoleucyl-tRNA(Ile) + AMP + diphosphate. Catalyzes the attachment of isoleucine to tRNA(Ile). As IleRS can inadvertently accommodate and process structurally similar amino acids such as valine, to avoid such errors it has two additional distinct tRNA(Ile)-dependent editing activities. One activity is designated as 'pretransfer' editing and involves the hydrolysis of activated Val-AMP. The other activity is designated 'posttransfer' editing and involves deacylation of mischarged Val-tRNA(Ile). This Bacillus cereus (strain AH820) protein is Isoleucine--tRNA ligase.